The primary structure comprises 582 residues: ATP-dependent lipid A-core flippase (582 aa).

Helical transmembrane passes span leucine 27 to leucine 48, phenylalanine 63 to serine 85, valine 144 to serine 168, valine 170 to arginine 188, leucine 244 to valine 266, and threonine 283 to threonine 302. The region spanning valine 28–arginine 310 is the ABC transmembrane type-1 domain. Positions valine 342–isoleucine 578 constitute an ABC transporter domain. Glycine 376 to serine 383 is a binding site for ATP.

Belongs to the ABC transporter superfamily. Lipid exporter (TC 3.A.1.106) family. Homodimer.

It localises to the cell inner membrane. It carries out the reaction ATP + H2O + lipid A-core oligosaccharideSide 1 = ADP + phosphate + lipid A-core oligosaccharideSide 2.. In terms of biological role, involved in lipopolysaccharide (LPS) biosynthesis. Translocates lipid A-core from the inner to the outer leaflet of the inner membrane. Transmembrane domains (TMD) form a pore in the inner membrane and the ATP-binding domain (NBD) is responsible for energy generation. Shows ATPase activity. This is ATP-dependent lipid A-core flippase from Vibrio cholerae serotype O1 (strain ATCC 39315 / El Tor Inaba N16961).